A 96-amino-acid chain; its full sequence is Large ribosomal subunit protein bL21 (96 aa).

The protein belongs to the bacterial ribosomal protein bL21 family. As to quaternary structure, part of the 50S ribosomal subunit. Contacts protein L20.

Functionally, this protein binds to 23S rRNA in the presence of protein L20. This is Large ribosomal subunit protein bL21 from Prosthecochloris aestuarii (strain DSM 271 / SK 413).